A 103-amino-acid polypeptide reads, in one-letter code: Secreted Ly-6/uPAR-related protein 1 (103 aa).

The signal sequence occupies residues 1-22 (MASRWAVQLLLVAAWSMGCGEA). The region spanning 24 to 73 (KCYTCKEPMTSASCRTITRCKPEDTACMTTLVTVEAEYPFNQSPVVTRSC) is the UPAR/Ly6 domain. 5 cysteine pairs are disulfide-bonded: cysteine 25–cysteine 50, cysteine 28–cysteine 37, cysteine 43–cysteine 73, cysteine 77–cysteine 93, and cysteine 94–cysteine 99.

As to quaternary structure, homodimer. Interacts with PLAU. Interacts with CHRNA7. As to expression, granulocytes. Expressed in skin. Predominantly expressed in the granular layer of skin, notably the acrosyringium. Identified in several biological fluids such as sweat, saliva, tears, plasma and urine.

The protein resides in the secreted. Has an antitumor activity. Was found to be a marker of late differentiation of the skin. Implicated in maintaining the physiological and structural integrity of the keratinocyte layers of the skin. In vitro down-regulates keratinocyte proliferation; the function may involve the proposed role as modulator of nicotinic acetylcholine receptors (nAChRs) activity. In vitro inhibits alpha-7-dependent nAChR currents in an allosteric manner. In T cells may be involved in regulation of intracellular Ca(2+) signaling. Seems to have an immunomodulatory function in the cornea. The function may implicate a possible role as a scavenger receptor for PLAU thereby blocking PLAU-dependent functions of PLAUR such as in cell migration and proliferation. The chain is Secreted Ly-6/uPAR-related protein 1 (SLURP1) from Homo sapiens (Human).